Consider the following 501-residue polypeptide: Aldehyde dehydrogenase 1A1 (501 aa).

S2 carries the N-acetylserine modification. N6-acetyllysine is present on residues K91 and K128. NAD(+)-binding positions include I167–N170, K193–E196, G226–P227, and G246–S247. K252 is modified (N6-acetyllysine). E269 serves as the catalytic Proton acceptor. E269–G271 contacts NAD(+). The active-site Nucleophile is C303. The segment at L336–S501 is mediates interaction with PRMT3. T337 is subject to Phosphothreonine. Residue E349 to K353 participates in NAD(+) binding. N6-acetyllysine is present on residues K353 and K367. Position 400–402 (E400–F402) interacts with NAD(+). At K410 the chain carries N6-acetyllysine. Residue S413 is modified to Phosphoserine. K419 and K495 each carry N6-acetyllysine.

The protein belongs to the aldehyde dehydrogenase family. Homotetramer. Interacts with PRMT3; the interaction is direct, inhibits ALDH1A1 aldehyde dehydrogenase activity and is independent of the methyltransferase activity of PRMT3. The N-terminus is blocked most probably by acetylation. Expressed in muscle, liver, small intestine, kidney, brain, lung, heart but not detected in erythrocytes (at protein level).

It localises to the cytoplasm. It is found in the cytosol. Its subcellular location is the cell projection. The protein localises to the axon. The enzyme catalyses an aldehyde + NAD(+) + H2O = a carboxylate + NADH + 2 H(+). The catalysed reaction is all-trans-retinal + NAD(+) + H2O = all-trans-retinoate + NADH + 2 H(+). It catalyses the reaction 9-cis-retinal + NAD(+) + H2O = 9-cis-retinoate + NADH + 2 H(+). It carries out the reaction 11-cis-retinal + NAD(+) + H2O = 11-cis-retinoate + NADH + 2 H(+). The enzyme catalyses 13-cis-retinal + NAD(+) + H2O = 13-cis-retinoate + NADH + 2 H(+). The catalysed reaction is 3-deoxyglucosone + NAD(+) + H2O = 2-dehydro-3-deoxy-D-gluconate + NADH + 2 H(+). It catalyses the reaction (E)-4-hydroxynon-2-enal + NAD(+) + H2O = (E)-4-hydroxynon-2-enoate + NADH + 2 H(+). It carries out the reaction malonaldehyde + NAD(+) + H2O = 3-oxopropanoate + NADH + 2 H(+). The enzyme catalyses hexanal + NAD(+) + H2O = hexanoate + NADH + 2 H(+). The catalysed reaction is propanal + NAD(+) + H2O = propanoate + NADH + 2 H(+). It catalyses the reaction acetaldehyde + NAD(+) + H2O = acetate + NADH + 2 H(+). It carries out the reaction benzaldehyde + NAD(+) + H2O = benzoate + NADH + 2 H(+). The enzyme catalyses 4-aminobutanal + NAD(+) + H2O = 4-aminobutanoate + NADH + 2 H(+). The protein operates within cofactor metabolism; retinol metabolism. In terms of biological role, cytosolic dehydrogenase that catalyzes the irreversible oxidation of a wide range of aldehydes to their corresponding carboxylic acid. Functions downstream of retinol dehydrogenases and catalyzes the oxidation of retinaldehyde into retinoic acid, the second step in the oxidation of retinol/vitamin A into retinoic acid. This pathway is crucial to control the levels of retinol and retinoic acid, two important molecules which excess can be teratogenic and cytotoxic. Also oxidizes aldehydes resulting from lipid peroxidation like (E)-4-hydroxynon-2-enal/HNE, malonaldehyde and hexanal that form protein adducts and are highly cytotoxic. By participating for instance to the clearance of (E)-4-hydroxynon-2-enal/HNE in the lens epithelium prevents the formation of HNE-protein adducts and lens opacification. Also functions downstream of fructosamine-3-kinase in the fructosamine degradation pathway by catalyzing the oxidation of 3-deoxyglucosone, the carbohydrate product of fructosamine 3-phosphate decomposition, which is itself a potent glycating agent that may react with lysine and arginine side-chains of proteins. Also has an aminobutyraldehyde dehydrogenase activity and is probably part of an alternative pathway for the biosynthesis of GABA/4-aminobutanoate in midbrain, thereby playing a role in GABAergic synaptic transmission. The protein is Aldehyde dehydrogenase 1A1 of Bos taurus (Bovine).